We begin with the raw amino-acid sequence, 626 residues long: Forkhead box protein O1 (626 aa).

Positions 1–11 (MAEAPLPPPPG) are enriched in pro residues. Disordered stretches follow at residues 1-57 (MAEA…PAAG), 90-142 (DIRQ…SRRN), 218-319 (SSWW…MPEQ), and 484-519 (PTYGSQPTHNKMSSHPHSHQPPPNHPSVNGRTMTHN). Composition is skewed to low complexity over residues 37-48 (NPSSSANSSPAP) and 101-133 (QHPQQQAGTLCAPSVPSALSPASSPSPLGAQQP). The fork-head DNA-binding region spans 144–238 (WGNLSYADLI…KNGKSPRRRA (95 aa)). The span at 248 to 259 (AKSRGRAAKKKA) shows a compositional bias: basic residues. Low complexity predominate over residues 262-277 (QSSQDGSSDSPGSQFS). 2 stretches are compositionally biased toward polar residues: residues 298–310 (RPRTSSNASTISG) and 484–494 (PTYGSQPTHNK).

Phosphorylated by AKT1; insulin-induced. Post-translationally, IGF1 rapidly induces phosphorylation of Thr-28, Ser-240 and Ser-303. Phosphorylation of Ser-240 decreases DNA-binding activity and promotes the phosphorylation of Thr-28, and Ser-303, which leads to nuclear exclusion and loss of function. Phosphorylation of Ser-313 is independent of IGF1 and leads to reduced function.

The protein resides in the cytoplasm. It localises to the nucleus. Functionally, transcription factor that regulates metabolic homeostasis in response to oxidative stress. Binds to the consensus sequence 5'-TT[G/A]TTTTG-3' and the related Daf-16 family binding element (DBE) with consensus sequence 5'-TT[G/A]TTTAC-3'. Main regulator of redox balance and osteoblast numbers and controls bone mass. Orchestrates the endocrine function of the skeleton in regulating glucose metabolism. Also acts as a key regulator of chondrogenic commitment of skeletal progenitor cells in response to lipid availability: when lipids levels are low, translocates to the nucleus and promotes expression of sox9, which induces chondrogenic commitment and suppresses fatty acid oxidation. Acts synergistically with atf4 to suppress osteocalcin/bglap activity, increasing glucose levels and triggering glucose intolerance and insulin insensitivity. Also suppresses the transcriptional activity of runx2, an upstream activator of osteocalcin/bglap. May act as a positive regulator of apoptosis in cardiac smooth muscle cells as a result of its transcriptional activation of pro-apoptotic genes. The sequence is that of Forkhead box protein O1 from Xenopus tropicalis (Western clawed frog).